We begin with the raw amino-acid sequence, 164 residues long: ATP synthase subunit b (164 aa).

Residues 10-32 (SAAMLMLFVLMVYFLNKFLYTPF) form a helical membrane-spanning segment.

This sequence belongs to the ATPase B chain family. F-type ATPases have 2 components, F(1) - the catalytic core - and F(0) - the membrane proton channel. F(1) has five subunits: alpha(3), beta(3), gamma(1), delta(1), epsilon(1). F(0) has three main subunits: a(1), b(2) and c(10-14). The alpha and beta chains form an alternating ring which encloses part of the gamma chain. F(1) is attached to F(0) by a central stalk formed by the gamma and epsilon chains, while a peripheral stalk is formed by the delta and b chains.

Its subcellular location is the cell inner membrane. In terms of biological role, f(1)F(0) ATP synthase produces ATP from ADP in the presence of a proton or sodium gradient. F-type ATPases consist of two structural domains, F(1) containing the extramembraneous catalytic core and F(0) containing the membrane proton channel, linked together by a central stalk and a peripheral stalk. During catalysis, ATP synthesis in the catalytic domain of F(1) is coupled via a rotary mechanism of the central stalk subunits to proton translocation. Component of the F(0) channel, it forms part of the peripheral stalk, linking F(1) to F(0). The polypeptide is ATP synthase subunit b (Thermotoga maritima (strain ATCC 43589 / DSM 3109 / JCM 10099 / NBRC 100826 / MSB8)).